A 910-amino-acid polypeptide reads, in one-letter code: UPF0182 protein Acid_6445 (910 aa).

Transmembrane regions (helical) follow at residues 17–37, 56–76, 101–121, 157–177, 210–229, 252–272, and 276–296; these read ITLL…AGYA, LYYG…ALWI, LALL…WTVV, LLRS…WIAA, FLRG…FYLG, IGLP…AFVA, and WFLA…PRIV.

It belongs to the UPF0182 family.

It localises to the cell membrane. The sequence is that of UPF0182 protein Acid_6445 from Solibacter usitatus (strain Ellin6076).